The sequence spans 95 residues: DNA-directed RNA polymerase subunit Rpo11 (95 aa).

The protein belongs to the archaeal Rpo11/eukaryotic RPB11/RPC19 RNA polymerase subunit family. In terms of assembly, part of the RNA polymerase complex.

It is found in the cytoplasm. The enzyme catalyses RNA(n) + a ribonucleoside 5'-triphosphate = RNA(n+1) + diphosphate. DNA-dependent RNA polymerase (RNAP) catalyzes the transcription of DNA into RNA using the four ribonucleoside triphosphates as substrates. The sequence is that of DNA-directed RNA polymerase subunit Rpo11 from Pyrococcus horikoshii (strain ATCC 700860 / DSM 12428 / JCM 9974 / NBRC 100139 / OT-3).